The chain runs to 411 residues: ATP-dependent Clp protease ATP-binding subunit ClpX (411 aa).

Residues 1-49 enclose the ClpX-type ZB domain; that stretch reads MSDRDIRCSFCGRTQKEVKKLIAGPGVYICDECVKLAYDIIEEDEEEDV. C8, C11, C30, and C33 together coordinate Zn(2+). 115 to 122 is an ATP binding site; the sequence is PTGVGKTL.

Belongs to the ClpX chaperone family. As to quaternary structure, component of the ClpX-ClpP complex. Forms a hexameric ring that, in the presence of ATP, binds to fourteen ClpP subunits assembled into a disk-like structure with a central cavity, resembling the structure of eukaryotic proteasomes.

Functionally, ATP-dependent specificity component of the Clp protease. It directs the protease to specific substrates. Can perform chaperone functions in the absence of ClpP. The sequence is that of ATP-dependent Clp protease ATP-binding subunit ClpX from Dictyoglomus thermophilum (strain ATCC 35947 / DSM 3960 / H-6-12).